The sequence spans 221 residues: Putative hemin import ATP-binding protein HrtA (221 aa).

In terms of domain architecture, ABC transporter spans 3–221 (LVVEDIVKNF…IELEDGKITD (219 aa)). 39-46 (GASGSGKT) contacts ATP.

The protein belongs to the ABC transporter superfamily. HrtA family. As to quaternary structure, the complex is composed of two ATP-binding proteins (HrtA), two transmembrane proteins (HrtB) and a solute-binding protein.

Its subcellular location is the cell membrane. Functionally, part of the ABC transporter complex hrt involved in hemin import. Responsible for energy coupling to the transport system. This is Putative hemin import ATP-binding protein HrtA (hrtA) from Staphylococcus aureus (strain bovine RF122 / ET3-1).